The sequence spans 442 residues: Cytokine receptor-like factor 3 (442 aa).

M1 is modified (N-acetylmethionine). The stretch at 10–57 (ELLLQEARENVEAAQSYRRELGHRLEGLREARRQIKESASQTRDVLKQ) forms a coiled coil. The 94-residue stretch at 181–274 (PPVQIEELIE…PQIGHSTLVP (94 aa)) folds into the Fibronectin type-III domain.

It belongs to the cytokine receptor-like factor 3 family. Expressed in several embryonic and adult tissues, including adult and fetal brain, liver, spleen and pancreas. Expressed in adult, but not fetal kidney. Expressed in skin and squamous cell carcinoma (SCC) and in several other cancer types. Also detected in lesion actinic keratosis (AK).

Its subcellular location is the cytoplasm. Its function is as follows. May play a role in the negative regulation of cell cycle progression. In Homo sapiens (Human), this protein is Cytokine receptor-like factor 3 (CRLF3).